Consider the following 735-residue polypeptide: Glutamine-dependent NAD(+) synthetase (735 aa).

A CN hydrolase domain is found at 4–274 (LRVATCNLNQ…VEVLDALVDL (271 aa)). Glu-44 functions as the Proton acceptor; for glutaminase activity in the catalytic mechanism. Residue Lys-113 is the For glutaminase activity of the active site. Cys-174 acts as the Nucleophile; for glutaminase activity in catalysis. The interval 324–711 (YHRPEEEIAF…STEGELRRRK (388 aa)) is ligase. ATP is bound at residue 354–361 (PLSGGADS). Ser-356 is a catalytic residue.

In the C-terminal section; belongs to the NAD synthetase family.

It carries out the reaction deamido-NAD(+) + L-glutamine + ATP + H2O = L-glutamate + AMP + diphosphate + NAD(+) + H(+). Its pathway is cofactor biosynthesis; NAD(+) biosynthesis; NAD(+) from deamido-NAD(+) (L-Gln route): step 1/1. The chain is Glutamine-dependent NAD(+) synthetase from Oryza sativa subsp. indica (Rice).